The following is a 276-amino-acid chain: 2,3,4,5-tetrahydropyridine-2,6-dicarboxylate N-succinyltransferase (276 aa).

Substrate-binding residues include R104 and D141.

The protein belongs to the transferase hexapeptide repeat family. In terms of assembly, homotrimer.

Its subcellular location is the cytoplasm. It carries out the reaction (S)-2,3,4,5-tetrahydrodipicolinate + succinyl-CoA + H2O = (S)-2-succinylamino-6-oxoheptanedioate + CoA. It participates in amino-acid biosynthesis; L-lysine biosynthesis via DAP pathway; LL-2,6-diaminopimelate from (S)-tetrahydrodipicolinate (succinylase route): step 1/3. The sequence is that of 2,3,4,5-tetrahydropyridine-2,6-dicarboxylate N-succinyltransferase from Pseudoalteromonas translucida (strain TAC 125).